Consider the following 411-residue polypeptide: DSEFAELKIRGKIFKLPILKASIGEDVIDISRVSAEADCFTYDPGFMSTASCQSTITYIDGDKGILRHRGYDIKDLAEKSDFLEVAYLLIYGELPSGEQYNNFTKQVAHHSLVNERLHYLFQTFCSSSHPMAIMLAAVGSLSAFYPDLLNFKEADYELTAIRMIAKIPTIAAMSYKYSIGQPFIYPDNSLDFTENFLHMMFATPCTKYTVNPIIKNALNKIFILHADHEQNASTSTVRIAGSSGANPFACISTGIASLWGPAHGGANEAVINMLKEIGSSEYIPKYIAKAKDKNDPFRLMGFGHRVYKNYDPRAAVLKETCKEVLKELGQLDNNPLLQIAIELEAIALKDEYFIERKLYPNVDFYSGIIYKAMGIPSQMFTVLFAIARTVGWMAQWKEMHEDPEQKISRPR.

Catalysis depends on residues histidine 304 and aspartate 363.

It belongs to the citrate synthase family.

It catalyses the reaction oxaloacetate + acetyl-CoA + H2O = citrate + CoA + H(+). Its pathway is carbohydrate metabolism; tricarboxylic acid cycle; isocitrate from oxaloacetate: step 1/2. In Rickettsia parkeri, this protein is Citrate synthase (gltA).